A 572-amino-acid polypeptide reads, in one-letter code: Asparagine synthetase [glutamine-hydrolyzing] 1 (572 aa).

The active-site For GATase activity is the C2. Positions C2–D186 constitute a Glutamine amidotransferase type-2 domain. L-glutamine is bound by residues R49–V53, N74–E76, and D97. In terms of domain architecture, Asparagine synthetase spans P194 to R546. ATP is bound at residue L233. Phosphoserine is present on S265. ATP-binding positions include I292 and S366 to G367. S509 is subject to Phosphoserine.

The catalysed reaction is L-aspartate + L-glutamine + ATP + H2O = L-asparagine + L-glutamate + AMP + diphosphate + H(+). Its pathway is amino-acid biosynthesis; L-asparagine biosynthesis; L-asparagine from L-aspartate (L-Gln route): step 1/1. In Saccharomyces cerevisiae (strain ATCC 204508 / S288c) (Baker's yeast), this protein is Asparagine synthetase [glutamine-hydrolyzing] 1 (ASN1).